We begin with the raw amino-acid sequence, 220 residues long: Probable metallo-hydrolase YybB (220 aa).

Zn(2+) is bound by residues His67, His69, Asp71, His72, His139, Asp158, and His200.

The protein belongs to the metallo-beta-lactamase superfamily. Zn(2+) serves as cofactor.

In Bacillus subtilis (strain 168), this protein is Probable metallo-hydrolase YybB (yybB).